Consider the following 355-residue polypeptide: N-acetyl-gamma-glutamyl-phosphate reductase (355 aa).

Residue C152 is part of the active site.

It belongs to the NAGSA dehydrogenase family. Type 1 subfamily.

Its subcellular location is the cytoplasm. It catalyses the reaction N-acetyl-L-glutamate 5-semialdehyde + phosphate + NADP(+) = N-acetyl-L-glutamyl 5-phosphate + NADPH + H(+). It functions in the pathway amino-acid biosynthesis; L-arginine biosynthesis; N(2)-acetyl-L-ornithine from L-glutamate: step 3/4. Functionally, catalyzes the NADPH-dependent reduction of N-acetyl-5-glutamyl phosphate to yield N-acetyl-L-glutamate 5-semialdehyde. The protein is N-acetyl-gamma-glutamyl-phosphate reductase of Psychrobacter arcticus (strain DSM 17307 / VKM B-2377 / 273-4).